Here is a 541-residue protein sequence, read N- to C-terminus: Putative ammonium transporter sll0537 (541 aa).

Transmembrane regions (helical) follow at residues 6 to 26, 44 to 64, 86 to 106, 117 to 137, 161 to 181, 203 to 223, 235 to 255, 260 to 280, 283 to 303, 316 to 336, and 356 to 376; these read TLWL…FMCL, FADF…IMFG, LAVF…IISG, YLLV…DWAW, FAGS…TILV, MPFS…FNGG, IMVN…LISL, MIQV…ITAS, VVMT…AYLV, VDAV…VGLF, and LLGI…FLTL.

The protein belongs to the ammonia transporter channel (TC 1.A.11.2) family.

The protein localises to the cell membrane. This Synechocystis sp. (strain ATCC 27184 / PCC 6803 / Kazusa) protein is Putative ammonium transporter sll0537.